The following is a 406-amino-acid chain: Serine/threonine transporter SstT (406 aa).

A run of 9 helical transmembrane segments spans residues 21–41 (LIIGIMLALWIPDIAAPVAIL), 45–65 (FVGALKAVAPVLVLILVMGAI), 79–99 (ILILYLLGTFLAGVTAVIASF), 138–158 (ALMNANYIGILSWAILLGLAL), 179–199 (VVKWVINLAPLGILGLVFDSI), 213–233 (LLLLLVGCMVFVALIINPLIV), 285–305 (ISIPLGATINMAGAAVTIAVL), 313–333 (LGITVDIPTAIILSVLSAIAA), and 360–380 (IAMQVVGVGFIIGVVQDSCET).

This sequence belongs to the dicarboxylate/amino acid:cation symporter (DAACS) (TC 2.A.23) family.

The protein resides in the cell membrane. The catalysed reaction is L-serine(in) + Na(+)(in) = L-serine(out) + Na(+)(out). The enzyme catalyses L-threonine(in) + Na(+)(in) = L-threonine(out) + Na(+)(out). Involved in the import of serine and threonine into the cell, with the concomitant import of sodium (symport system). This Desulfitobacterium hafniense (strain Y51) protein is Serine/threonine transporter SstT.